The primary structure comprises 117 residues: MELGLRWVFLVAILEGVQCEVQLVESGGGLVKPGGSLRLSCAASGFTFSSYSMNWVRQAPGKGLEWVSSISSSSSYIYYADSVKGRFTISRDNAKNSLYLQMNSLRAEDTAVYYCAR.

Positions 1 to 19 are cleaved as a signal peptide; that stretch reads MELGLRWVFLVAILEGVQC. The segment at 20 to 44 is framework-1; sequence EVQLVESGGGLVKPGGSLRLSCAAS. Residues 20-117 form the Ig-like domain; sequence EVQLVESGGG…EDTAVYYCAR (98 aa). Cysteines 41 and 115 form a disulfide. Positions 45 to 52 are complementarity-determining-1; sequence GFTFSSYS. The interval 53–69 is framework-2; that stretch reads MNWVRQAPGKGLEWVSS. The segment at 70–77 is complementarity-determining-2; it reads ISSSSSYI. Positions 78–115 are framework-3; sequence YYADSVKGRFTISRDNAKNSLYLQMNSLRAEDTAVYYC. A complementarity-determining-3 region spans residues 116–117; the sequence is AR.

As to quaternary structure, immunoglobulins are composed of two identical heavy chains and two identical light chains; disulfide-linked.

It localises to the secreted. The protein localises to the cell membrane. V region of the variable domain of immunoglobulin heavy chains that participates in the antigen recognition. Immunoglobulins, also known as antibodies, are membrane-bound or secreted glycoproteins produced by B lymphocytes. In the recognition phase of humoral immunity, the membrane-bound immunoglobulins serve as receptors which, upon binding of a specific antigen, trigger the clonal expansion and differentiation of B lymphocytes into immunoglobulins-secreting plasma cells. Secreted immunoglobulins mediate the effector phase of humoral immunity, which results in the elimination of bound antigens. The antigen binding site is formed by the variable domain of one heavy chain, together with that of its associated light chain. Thus, each immunoglobulin has two antigen binding sites with remarkable affinity for a particular antigen. The variable domains are assembled by a process called V-(D)-J rearrangement and can then be subjected to somatic hypermutations which, after exposure to antigen and selection, allow affinity maturation for a particular antigen. The protein is Immunoglobulin heavy variable 3-21 of Homo sapiens (Human).